The chain runs to 705 residues: Polyribonucleotide nucleotidyltransferase (705 aa).

Mg(2+) contacts are provided by D486 and D492. Positions 553 to 612 constitute a KH domain; it reads PRIYKIKINPEKIKDVIGKGGSVIRMLTEKTKSSIEIEDDGTVKVISTDIKNAQCALKKI. In terms of domain architecture, S1 motif spans 622-690; it reads NKIYVAKITR…RYGRIRLSFT (69 aa).

Belongs to the polyribonucleotide nucleotidyltransferase family. Component of the RNA degradosome, which is a multiprotein complex involved in RNA processing and mRNA degradation. Mg(2+) serves as cofactor.

It localises to the cytoplasm. It carries out the reaction RNA(n+1) + phosphate = RNA(n) + a ribonucleoside 5'-diphosphate. Involved in mRNA degradation. Catalyzes the phosphorolysis of single-stranded polyribonucleotides processively in the 3'- to 5'-direction. This chain is Polyribonucleotide nucleotidyltransferase, found in Wigglesworthia glossinidia brevipalpis.